We begin with the raw amino-acid sequence, 927 residues long: MSFWDNNKDTFLAAGKATAKGIGTGTKALGKAGYRTYKNSQGERRGVPDNEADKAERSSYETRNNTNTSAYSGAYSGSNTGSNTGSNSGTSYYQSQPRHVDVNAYPLPPKRVAGPGEVRPLGHQDQGQQHQQMQQPQQHYSQNAQYSQAPYQPQQPQYPQQPQQPQYPQQPYSQDTQYSQAPYHPQQQIQPQPLTEGERPIPTPPTQAGTQPQFQPQLQQYQNGHIQQSHPAETQQPTYQVEQQQQSYSTEPQQQLQQPIFQPQPQSQDPYQQSPEANDSNQRPPAYDDSQLQNTQQEPTQVDSEPVKKSLPDPSSFAPPPIHKNRGVSEPSDSASYKKTGVSGKPSHVGKHGTSTTPKPTTLDMDPSKIGQPPPKPYRENSETTLNSASSNVRQTPPLPTRQSSNTTQNQLQTTSTPVPPPRSNTASVNSTSSQASSLPAPLPLPDNTGSEGSQKKAPPPKPIKKPMQLTSDGSSRNAEPDTLKQEPKNYMPNFAEEIALRKNTNSSLSGKGNLNSEDFNSELNSKLEPVNFENHAKPEPSDATPSLVKPKPKVMPKPKIGPKPSISPKPETKGKPIIKSKSEIKAKPDLKPKPIIGTKPVTVFGSKKIGNDMPISDSPSNLHVNKSNTPPPPIPRPRSAASNTSTPPPPPPSRNYRRAKAAAPPIESGPPNLDLQLSTGWFATTSGPMVLPKDLSGLNYNTSYSYVTRGSDKSHTRNINLRLRDLAIISYAITWSNDNINNAKMEVTKFIPSPISNKIPTVDELVANQNRFGEYVASWSENKMGQKVGTGECWDLARDALLKGCGKHAFVSTYYHHGYPIISLQGSENGVSYVDGKSPLDELRRGDILQYTSCIFKDKIRGSVSTVGNPDHTSVVLENTGDKLIIAEQNINNLKIVKKTEICLQNLTQGIVVGYRPMPAGWGGNL.

Residues 22–33 show a composition bias toward low complexity; that stretch reads IGTGTKALGKAG. Residues 22–671 are disordered; sequence IGTGTKALGK…AAAPPIESGP (650 aa). Residues 41–60 show a composition bias toward basic and acidic residues; sequence QGERRGVPDNEADKAERSSY. 3 stretches are compositionally biased toward low complexity: residues 67 to 93, 123 to 193, and 206 to 222; these read NTSA…TSYY, HQDQ…QPQP, and TQAG…QQYQ. The segment covering 223 to 232 has biased composition (polar residues); that stretch reads NGHIQQSHPA. Over residues 233 to 275 the composition is skewed to low complexity; the sequence is ETQQPTYQVEQQQQSYSTEPQQQLQQPIFQPQPQSQDPYQQSP. Polar residues-rich tracts occupy residues 290–303 and 383–395; these read SQLQ…TQVD and ETTL…NVRQ. 2 stretches are compositionally biased toward low complexity: residues 401 to 417 and 424 to 440; these read TRQS…TTST and SNTA…SSLP. The span at 469 to 478 shows a compositional bias: polar residues; it reads QLTSDGSSRN. The span at 479–488 shows a compositional bias: basic and acidic residues; that stretch reads AEPDTLKQEP. The segment covering 503-517 has biased composition (low complexity); the sequence is KNTNSSLSGKGNLNS. The span at 558 to 568 shows a compositional bias: pro residues; sequence KPKIGPKPSIS. The segment covering 571 to 593 has biased composition (basic and acidic residues); that stretch reads PETKGKPIIKSKSEIKAKPDLKP. Residues 618 to 629 show a composition bias toward polar residues; it reads DSPSNLHVNKSN.

This sequence belongs to the AIM3 family.

It is found in the membrane raft. The protein is Altered inheritance of mitochondria protein 3 (AIM3) of Debaryomyces hansenii (strain ATCC 36239 / CBS 767 / BCRC 21394 / JCM 1990 / NBRC 0083 / IGC 2968) (Yeast).